Here is a 505-residue protein sequence, read N- to C-terminus: MNDLMLDKSALLFGVSKYLEKGIITGNVLIHKSLLAELERESNDGLVSAEIALDEVKKLKDITERILVNFEIVGDDSKKGEANELSREYCLEKGCIIVTADETQKKICDAMGIQYNFLQPLKQGLSFESFFDDETMSLHIKEDTVPRAKKGKPGNWKFVNLSDKPMLSTDVRMIANEIINAVRLIKGSFVEIERRGSLIIQLGNYRVVITRPPLSDGWEITITRPVVRKRLEDYNLDERLIKRLEERAEGIIIAGAPGMGKTTFAQALAEYYMRLGKIVKTIESPRDMHLPPEITQYSKNYAEIGELHDILLLSRPDYTVYDEMRNDEDFKLYVDLRLAGVGMVGVVHATSPIDAIHRFVNRVDIGTIPNILDTIIFINSGNVSKVYTLEMTVKVPAGLKEADLARPVVEIKDLATGNTEYEIYVFGEQTMIVPVNRGITMSNMEFKISKIVNNIIPNATVKYEDGEYVIVIPKEEIGKYNRKLVQRLKRLEKKNNIKIKIKLSD.

Residues 2-106 enclose the PINc domain; it reads NDLMLDKSAL…IVTADETQKK (105 aa). A KH domain region spans residues 434–505; it reads PVNRGITMSN…NIKIKIKLSD (72 aa). The segment at 493–505 is required for maximum interaction with Hjc and Hjm; the sequence is KKNNIKIKIKLSD.

Homohexamer; the central pore (25-31 Angstroms) is large enough to hold dsDNA. In PDB:5F4H two of the 6 subunits are in an ATP-binding competent conformation. Interacts with Holliday junction resolvase Hjc; in the presence of HJ DNA this interaction decreases branch migration but not Y-DNA unwinding. Interacts with helicase Hjm (hel308) which decreases the DNA helicase activity of Hjm. Ca(2+) is required as a cofactor.

It carries out the reaction ATP + H2O = ADP + phosphate + H(+). Promotes Holliday junction (HJ) branch migration and unwinds Y-shaped DNA (but not replication forks or dsDNA) in an ATP hydrolysis-dependent manner. Stimulates cleavage by HJ resolvase Hjc. Unwinds Y-shaped and 3'-flap DNA substrates. In the absence of other proteins stabilizes replication forks (prevents spontaneous unwinding); Hjc, Hjm (Hel308) and PINA coordinate HJ migration and cleavage of replication forks in a coordinated way. Inhibits the 5'-3' (but not 3'-5') helicase activity of helicase Hjm (Hel308) on overhang DNA. Probably acts as an ATP-dependent pump that pulls DNA through the hexamer. The protein is Holliday junction branch migration ATPase PINA of Saccharolobus islandicus (strain REY15A) (Sulfolobus islandicus).